The chain runs to 561 residues: Arginine--tRNA ligase (561 aa).

The 'HIGH' region motif lies at 128-138 (ANPTGPLHVGH).

This sequence belongs to the class-I aminoacyl-tRNA synthetase family. In terms of assembly, monomer.

It is found in the cytoplasm. It carries out the reaction tRNA(Arg) + L-arginine + ATP = L-arginyl-tRNA(Arg) + AMP + diphosphate. In Methylibium petroleiphilum (strain ATCC BAA-1232 / LMG 22953 / PM1), this protein is Arginine--tRNA ligase.